Consider the following 122-residue polypeptide: Large ribosomal subunit protein uL14 (122 aa).

It belongs to the universal ribosomal protein uL14 family. As to quaternary structure, part of the 50S ribosomal subunit. Forms a cluster with proteins L3 and L19. In the 70S ribosome, L14 and L19 interact and together make contacts with the 16S rRNA in bridges B5 and B8.

Binds to 23S rRNA. Forms part of two intersubunit bridges in the 70S ribosome. This is Large ribosomal subunit protein uL14 from Helicobacter pylori (strain J99 / ATCC 700824) (Campylobacter pylori J99).